Here is a 196-residue protein sequence, read N- to C-terminus: Blue copper protein (196 aa).

An N-terminal signal peptide occupies residues 1–22 (MAGVFKTVTFLVLVFAAVVVFA). A Phytocyanin domain is found at 23-125 (EDYDVGDDTE…GQKLSITVVA (103 aa)). H66 provides a ligand contact to Cu cation. Cysteines 79 and 113 form a disulfide. Residue N98 is glycosylated (N-linked (GlcNAc...) asparagine). Cu cation is bound by residues C107, H112, and Q117. The segment at 133–173 (TPGAGATPAPGSTPSTGGTTPPTAGGTTTPSGSSGTTTPAG) is disordered. Positions 135 to 173 (GAGATPAPGSTPSTGGTTPPTAGGTTTPSGSSGTTTPAG) are enriched in low complexity. A lipid anchor (GPI-anchor amidated asparagine) is attached at N174. The propeptide at 175–196 (AASSLGGATFLVAFVSAVVALF) is removed in mature form.

The protein resides in the cell membrane. Its function is as follows. Probably acts as an electron carrier. This is Blue copper protein (BCB) from Arabidopsis thaliana (Mouse-ear cress).